We begin with the raw amino-acid sequence, 600 residues long: Kynurenine 3-monooxygenase (600 aa).

The interval 217–242 (GDSCADEPSGCGGRKQATTKSQGSEY) is disordered.

The protein belongs to the aromatic-ring hydroxylase family. KMO subfamily. FAD serves as cofactor.

It localises to the mitochondrion outer membrane. It carries out the reaction L-kynurenine + NADPH + O2 + H(+) = 3-hydroxy-L-kynurenine + NADP(+) + H2O. The protein operates within cofactor biosynthesis; NAD(+) biosynthesis; quinolinate from L-kynurenine: step 1/3. Functionally, catalyzes the hydroxylation of L-kynurenine (L-Kyn) to form 3-hydroxy-L-kynurenine (L-3OHKyn). Required for synthesis of quinolinic acid. The protein is Kynurenine 3-monooxygenase of Mycosarcoma maydis (Corn smut fungus).